Consider the following 154-residue polypeptide: Protein MGF 300-2R (154 aa).

Belongs to the asfivirus MGF 300 family.

In terms of biological role, plays a role in virus cell tropism, and may be required for efficient virus replication in macrophages. This chain is Protein MGF 300-2R, found in Ornithodoros (relapsing fever ticks).